The sequence spans 484 residues: Cobyric acid synthase (484 aa).

Residues 248-435 enclose the GATase cobBQ-type domain; the sequence is VLKVIVPVLP…LHGLFEGSQS (188 aa). Cysteine 329 (nucleophile) is an active-site residue. The active site involves histidine 427.

Belongs to the CobB/CobQ family. CobQ subfamily.

Its pathway is cofactor biosynthesis; adenosylcobalamin biosynthesis. Its function is as follows. Catalyzes amidations at positions B, D, E, and G on adenosylcobyrinic A,C-diamide. NH(2) groups are provided by glutamine, and one molecule of ATP is hydrogenolyzed for each amidation. The protein is Cobyric acid synthase of Pseudomonas putida (strain GB-1).